We begin with the raw amino-acid sequence, 376 residues long: Succinyl-diaminopimelate desuccinylase (376 aa).

Position 67 (His-67) interacts with Zn(2+). The active site involves Asp-69. Asp-100 provides a ligand contact to Zn(2+). Catalysis depends on Glu-134, which acts as the Proton acceptor. Zn(2+) is bound by residues Glu-135, Glu-163, and His-349.

The protein belongs to the peptidase M20A family. DapE subfamily. Homodimer. Zn(2+) serves as cofactor. It depends on Co(2+) as a cofactor.

The catalysed reaction is N-succinyl-(2S,6S)-2,6-diaminopimelate + H2O = (2S,6S)-2,6-diaminopimelate + succinate. It participates in amino-acid biosynthesis; L-lysine biosynthesis via DAP pathway; LL-2,6-diaminopimelate from (S)-tetrahydrodipicolinate (succinylase route): step 3/3. Catalyzes the hydrolysis of N-succinyl-L,L-diaminopimelic acid (SDAP), forming succinate and LL-2,6-diaminopimelate (DAP), an intermediate involved in the bacterial biosynthesis of lysine and meso-diaminopimelic acid, an essential component of bacterial cell walls. This is Succinyl-diaminopimelate desuccinylase from Idiomarina loihiensis (strain ATCC BAA-735 / DSM 15497 / L2-TR).